Consider the following 393-residue polypeptide: Elongation factor Tu (393 aa).

The 199-residue stretch at 6–204 (KPHINVGTIG…ALEKIELPMR (199 aa)) folds into the tr-type G domain. Residues 15-22 (GHVDHGKT) are G1. 15 to 22 (GHVDHGKT) contacts GTP. Thr-22 is a binding site for Mg(2+). The G2 stretch occupies residues 58-62 (GITIS). Positions 79 to 82 (DCPG) are G3. GTP-binding positions include 79-83 (DCPGH) and 134-137 (NKCD). The segment at 134 to 137 (NKCD) is G4. Residues 172–174 (SAV) form a G5 region.

Belongs to the TRAFAC class translation factor GTPase superfamily. Classic translation factor GTPase family. EF-Tu/EF-1A subfamily. As to quaternary structure, monomer.

Its subcellular location is the cytoplasm. The enzyme catalyses GTP + H2O = GDP + phosphate + H(+). In terms of biological role, GTP hydrolase that promotes the GTP-dependent binding of aminoacyl-tRNA to the A-site of ribosomes during protein biosynthesis. In Anaplasma phagocytophilum (strain HZ), this protein is Elongation factor Tu.